A 388-amino-acid chain; its full sequence is Splicing factor 3B subunit 4 (388 aa).

RRM domains follow at residues 13 to 91 and 100 to 179; these read ATIY…KASA and ANIF…YAFK. Residues 244-388 are disordered; sequence QPPPLMGMAQ…GMIPPPPPPS (145 aa). Composition is skewed to pro residues over residues 261 to 325, 333 to 355, and 362 to 388; these read PPVP…PSRF, MPPPPPPGMRYPGGMPPPPPPRY, and MYPPPPPSRPPAPPSGHGMIPPPPPPS.

The protein belongs to the SF3B4 family.

It localises to the nucleus. Its function is as follows. Subunit of the splicing factor SF3B required for 'A' complex assembly formed by the stable binding of U2 snRNP to the branchpoint sequence (BPS) in pre-mRNA. Sequence independent binding of SF3A/SF3B complex upstream of the branch site is essential, it may anchor U2 snRNP to the pre-mRNA. May also be involved in the assembly of the 'E' complex. SF3B4 has been found in complex 'B' and 'C' as well. Belongs also to the minor U12-dependent spliceosome, which is involved in the splicing of rare class of nuclear pre-mRNA intron. The polypeptide is Splicing factor 3B subunit 4 (sap-49) (Caenorhabditis elegans).